Consider the following 196-residue polypeptide: Imidazoleglycerol-phosphate dehydratase (196 aa).

This sequence belongs to the imidazoleglycerol-phosphate dehydratase family.

It is found in the cytoplasm. The catalysed reaction is D-erythro-1-(imidazol-4-yl)glycerol 3-phosphate = 3-(imidazol-4-yl)-2-oxopropyl phosphate + H2O. It functions in the pathway amino-acid biosynthesis; L-histidine biosynthesis; L-histidine from 5-phospho-alpha-D-ribose 1-diphosphate: step 6/9. This chain is Imidazoleglycerol-phosphate dehydratase, found in Dehalococcoides mccartyi (strain CBDB1).